Reading from the N-terminus, the 183-residue chain is ATP synthase subunit b, chloroplastic (183 aa).

Residues 20–42 traverse the membrane as a helical segment; the sequence is INTNVFETNIINLAIVVGTLFYY.

The protein belongs to the ATPase B chain family. As to quaternary structure, F-type ATPases have 2 components, F(1) - the catalytic core - and F(0) - the membrane proton channel. F(1) has five subunits: alpha(3), beta(3), gamma(1), delta(1), epsilon(1). F(0) has four main subunits: a(1), b(1), b'(1) and c(10-14). The alpha and beta chains form an alternating ring which encloses part of the gamma chain. F(1) is attached to F(0) by a central stalk formed by the gamma and epsilon chains, while a peripheral stalk is formed by the delta, b and b' chains.

It is found in the plastid. It localises to the chloroplast thylakoid membrane. Its function is as follows. F(1)F(0) ATP synthase produces ATP from ADP in the presence of a proton or sodium gradient. F-type ATPases consist of two structural domains, F(1) containing the extramembraneous catalytic core and F(0) containing the membrane proton channel, linked together by a central stalk and a peripheral stalk. During catalysis, ATP synthesis in the catalytic domain of F(1) is coupled via a rotary mechanism of the central stalk subunits to proton translocation. Component of the F(0) channel, it forms part of the peripheral stalk, linking F(1) to F(0). This is ATP synthase subunit b, chloroplastic from Euglena gracilis.